The primary structure comprises 534 residues: MFSWVSKDARRKKEPELFQTVSEGLRQLYAQKLLPLEEHYRFHEFHSPALEDADFDNKPMVLLVGQYSTGKTTFIRHLIEQDFPGMRIGPEPTTDSFIAVMHGPTEGVVPGNALVVDPRRPFRKLNAFGNAFLNRFMCAQLPNPVLDSISIIDTPGILSGEKQRISRGYDFAAVLEWFAERVDRIILLFDAHKLDISDEFSEVIKALKNHEDKIRVVLNKADQIETQQLMRVYGALMWSLGKIINTPEVVRVYIGSFWSHPLLIPDNRKLFEAEEQDLFKDIQSLPRNAALRKLNDLIKRARLAKVHAYIISSLKKEMPNVFGKESKKKELVNNLGEIYQKIEREHQISPGDFPNLRKMQELLQTQDFSKFQALKPKLLDTVDDMLANDIARLMVMVRQEESLMPAQVVKGGAFDGTMNGPFGHGYGEGAGEGIDDVEWVVGKDKPTYDEIFYTLSPVNGKITGANAKKEMVKSKLPNTVLGKIWKLADVDRDGLLDDEEFALANHLIKVKLEGHELPADLPPHLVPPSKRRHE.

Position 1 is an N-acetylmethionine (methionine 1). The Dynamin-type G domain occupies 55–286 (FDNKPMVLLV…DLFKDIQSLP (232 aa)). Residues 65–72 (GQYSTGKT) are G1 motif. 65 to 72 (GQYSTGKT) contacts ATP. Positions 91–92 (EP) are G2 motif. Residues 153–156 (DTPG) are G3 motif. A coiled-coil region spans residues 198–227 (DEFSEVIKALKNHEDKIRVVLNKADQIETQ). The segment at 219 to 222 (NKAD) is G4 motif. Lysine 220 provides a ligand contact to ATP. Residue isoleucine 243 is a region of interest, G5 motif. ATP is bound at residue tryptophan 258. The 89-residue stretch at 444 to 532 (DKPTYDEIFY…PHLVPPSKRR (89 aa)) folds into the EH domain. At serine 456 the chain carries Phosphoserine. The EF-hand domain maps to 476–511 (LPNTVLGKIWKLADVDRDGLLDDEEFALANHLIKVK). Positions 489, 491, 493, and 500 each coordinate Ca(2+).

This sequence belongs to the TRAFAC class dynamin-like GTPase superfamily. Dynamin/Fzo/YdjA family. EHD subfamily. As to quaternary structure, homooligomer, and heterooligomer with EHD2, EHD3 and EHD4, ATP-binding is required for heterooligomerization. Interacts (via EH domain) with MICALL1 (via NPF1 motif); the interaction is direct and recruits EHD1 to membranes. Interacts with RAB35; the interaction is indirect through MICALL1 and recruits EHD1 to membranes. Interacts (via EH domain) with PACSIN2 (via NPF motifs); regulates localization to tubular recycling endosome membranes. Interacts with PACSIN1. Interacts with RAB8A. Interacts with FER1L5 (via second C2 domain). Interacts with MYOF. Interacts with ZFYVE20. Interacts (via EH domain) with RAB11FIP2.

The protein localises to the recycling endosome membrane. It localises to the early endosome membrane. It is found in the cell membrane. The protein resides in the cell projection. Its subcellular location is the cilium membrane. Functionally, ATP- and membrane-binding protein that controls membrane reorganization/tubulation upon ATP hydrolysis. Acts in early endocytic membrane fusion and membrane trafficking of recycling endosomes. Recruited to endosomal membranes upon nerve growth factor stimulation, indirectly regulates neurite outgrowth. Plays a role in myoblast fusion. Involved in the unidirectional retrograde dendritic transport of endocytosed BACE1 and in efficient sorting of BACE1 to axons implicating a function in neuronal APP processing. Plays a role in the formation of the ciliary vesicle (CV), an early step in cilium biogenesis. Proposed to be required for the fusion of distal appendage vesicles (DAVs) to form the CV by recruiting SNARE complex component SNAP29. Is required for recruitment of transition zone proteins CEP290, RPGRIP1L, TMEM67 and B9D2, and of IFT20 following DAV reorganization before Rab8-dependent ciliary membrane extension. Required for the loss of CCP110 form the mother centriole essential for the maturation of the basal body during ciliogenesis. The polypeptide is EH domain-containing protein 1 (Bos taurus (Bovine)).